We begin with the raw amino-acid sequence, 105 residues long: MVNIPKTKNTYCKNKECKKHTLHKVTQYKKGKDSLAAQGKRRYDRKQSGYGGQTKPVFHKKAKTTKKIVLRLQCQSCKHFSQRPIKRCKHFEIGGDKKGKGTSLF.

The disordered stretch occupies residues 28 to 57; it reads YKKGKDSLAAQGKRRYDRKQSGYGGQTKPV.

The protein belongs to the eukaryotic ribosomal protein eL42 family.

The sequence is that of Large ribosomal subunit protein eL42z/eL42y (RPL36AA) from Arabidopsis thaliana (Mouse-ear cress).